The chain runs to 149 residues: Calmodulin (149 aa).

EF-hand domains lie at 8-43 (EQIS…LGQN), 44-79 (PTEA…KMQD), 81-116 (DSEE…LGEK), and 117-149 (LTDE…MMSK). Positions 21, 23, 25, 27, 32, 57, 59, 61, 63, 68, 94, 96, 98, and 105 each coordinate Ca(2+). K116 is subject to N6,N6,N6-trimethyllysine. Positions 130, 132, 134, 136, and 141 each coordinate Ca(2+).

This sequence belongs to the calmodulin family.

Calmodulin mediates the control of a large number of enzymes, ion channels and other proteins by Ca(2+). Among the enzymes to be stimulated by the calmodulin-Ca(2+) complex are a number of protein kinases and phosphatases. This chain is Calmodulin, found in Trypanosoma brucei brucei.